The primary structure comprises 1060 residues: Centrosomal protein of 131 kDa (1060 aa).

Over residues 1-11 (MKGSRTITATP) the composition is skewed to polar residues. Positions 1-96 (MKGSRTITAT…TGSPRPAEPT (96 aa)) are disordered. The interaction with PLK4 stretch occupies residues 1–244 (MKGSRTITAT…SQSARGTTGL (244 aa)). Serine 14 and serine 35 each carry phosphoserine. Polar residues-rich tracts occupy residues 32 to 50 (RPGS…SVAT) and 73 to 88 (LRRS…SWTG). Position 47 is a phosphoserine; by MAPKAPK2 (serine 47). Serine 78 bears the Phosphoserine; by MAPKAPK2 and PLK4 mark. Serine 89, serine 105, serine 114, serine 146, and serine 150 each carry phosphoserine. 2 disordered regions span residues 136–155 (LALP…LGPR) and 217–248 (EGGE…LRRR). The segment covering 217–226 (EGGEGSDLGK) has biased composition (basic and acidic residues). The 21-residue stretch at 263-283 (NQAAVTIQRWYRCQVQRRRAG) folds into the IQ domain. 2 stretches are compositionally biased toward basic and acidic residues: residues 314–327 (EEAA…EKAR) and 344–363 (KASE…RAPE). A disordered region spans residues 314 to 437 (EEAARKKARE…VSGSSRGKAR (124 aa)). Residues 398–408 (ASESSPEQWQS) are compositionally biased toward low complexity. The span at 409–424 (PEDKPQDIHSQGEARQ) shows a compositional bias: basic and acidic residues. The residue at position 473 (threonine 473) is a Phosphothreonine. Serine 481 carries the phosphoserine modification.

The protein belongs to the CEP131 family. In terms of assembly, self-associates. Associates with the centriolar satellite BBSome protein complex Interacts with BBS4; the interaction limits BBS4 availability for association with the BBSome complex, and hence negatively regulates ciliary localization of the BBSome complex. Interacts with MIB1. Interacts with PCM1; the interaction increases in response to ultraviolet light (UV) radiation. Associates with microtubule; association to microtubule is reduced in response to cellular stress, such as UV stimulation, in a process that requires p38 MAP kinase signaling. Interacts with CEP290, DCTN1, MAP1LC3B, PCNT, PCM1 and CEP152. Interacts with 14-3-3 proteins following UV-induced phosphorylation by MAPKAPK2; this inhibits formation of novel centriolar satellites. Interacts with SDCCAG8. Interacts with CCDC61. Interacts with PLK4. Post-translationally, ubiquitinated. Undergoes monoubiquitination catalyzed by the E3 ubiquitin-protein ligase MIB1 in proliferating cells, preventing cilia formation. Monoubiquitination by MIB1 is inhibited in response to cellular stress, such as ultraviolet light (UV) radiation or heat shock, resulting in ciliogenesis restoration. MAPKAPK2-dependent phosphorylation at Ser-47 and Ser-78 occurs in response to cellular stress such as exposure to ultraviolet irradiation and promotes binding to 14-3-3 proteins which leads to cytoplasmic sequestration of CEP131 and blocks formation of new centriolar satellites. Phosphorylation at Ser-78 mediated by PLK4 is essential for proper organization and integrity of centriolar satellites but is dispensable for its localization to centrioles and its function in ciliogenesis. Localized to the pre-acrosome region of round and elongated spermatids in testis but also present in ovary, brain and adipose tissue.

It localises to the cytoplasm. Its subcellular location is the cytoskeleton. The protein resides in the microtubule organizing center. It is found in the centrosome. The protein localises to the centriolar satellite. It localises to the centriole. Its subcellular location is the cilium basal body. The protein resides in the cytoplasmic vesicle. It is found in the secretory vesicle. The protein localises to the acrosome. In terms of biological role, component of centriolar satellites contributing to the building of a complex and dynamic network required to regulate cilia/flagellum formation. In proliferating cells, MIB1-mediated ubiquitination induces its sequestration within centriolar satellites, precluding untimely cilia formation initiation. In contrast, during normal and ultraviolet or heat shock cellular stress-induced ciliogenesis, its non-ubiquitinated form is rapidly displaced from centriolar satellites and recruited to centrosome/basal bodies in a microtubule- and p38 MAPK-dependent manner. Also acts as a negative regulator of BBSome ciliary trafficking. Plays a role in sperm flagellar formation; may be involved in the regulation of intraflagellar transport (IFT) and/or intramanchette (IMT) trafficking, which are important for axoneme extension and/or cargo delivery to the nascent sperm tail. Required for optimal cell proliferation and cell cycle progression; may play a role in the regulation of genome stability and centriole duplication in non-ciliogenic cells. Involved in centriole duplication. Required for CEP152, WDR62 and CEP63 centrosomal localization and promotes the centrosomal localization of CDK2. Essential for maintaining proper centriolar satellite integrity. This Mus musculus (Mouse) protein is Centrosomal protein of 131 kDa (Cep131).